Reading from the N-terminus, the 334-residue chain is Tryptophan--tRNA ligase (334 aa).

Residues 12–14 (QPS) and 20–21 (GN) each bind ATP. A 'HIGH' region motif is present at residues 13–21 (PSGIPTLGN). Asp-136 serves as a coordination point for L-tryptophan. Residues 148 to 150 (GKD), Ile-187, and 196 to 200 (KMSKS) each bind ATP. The 'KMSKS' region signature appears at 196–200 (KMSKS).

This sequence belongs to the class-I aminoacyl-tRNA synthetase family. In terms of assembly, homodimer.

The protein localises to the cytoplasm. It catalyses the reaction tRNA(Trp) + L-tryptophan + ATP = L-tryptophyl-tRNA(Trp) + AMP + diphosphate + H(+). Functionally, catalyzes the attachment of tryptophan to tRNA(Trp). The sequence is that of Tryptophan--tRNA ligase from Wigglesworthia glossinidia brevipalpis.